Consider the following 195-residue polypeptide: dTTP/UTP pyrophosphatase (195 aa).

Aspartate 73 acts as the Proton acceptor in catalysis.

The protein belongs to the Maf family. YhdE subfamily. Requires a divalent metal cation as cofactor.

It is found in the cytoplasm. It catalyses the reaction dTTP + H2O = dTMP + diphosphate + H(+). The catalysed reaction is UTP + H2O = UMP + diphosphate + H(+). Functionally, nucleoside triphosphate pyrophosphatase that hydrolyzes dTTP and UTP. May have a dual role in cell division arrest and in preventing the incorporation of modified nucleotides into cellular nucleic acids. This chain is dTTP/UTP pyrophosphatase, found in Exiguobacterium sibiricum (strain DSM 17290 / CCUG 55495 / CIP 109462 / JCM 13490 / 255-15).